Reading from the N-terminus, the 295-residue chain is Protein transport protein SSO2 (295 aa).

Residues 1–18 (MSNPYQNSQNGYQQNNSY) show a composition bias toward low complexity. The tract at residues 1 to 31 (MSNPYQNSQNGYQQNNSYELNNYPNKQYSSS) is disordered. Over 1 to 270 (MSNPYQNSQN…SAKSARKKKL (270 aa)) the chain is Cytoplasmic. The segment covering 19–31 (ELNNYPNKQYSSS) has biased composition (polar residues). Positions 33–110 (EDDFVQFMNE…NRIKNVQTQA (78 aa)) form a coiled coil. Residues 196–258 (LNEVQVRHRE…EQGVGHTNKA (63 aa)) enclose the t-SNARE coiled-coil homology domain. Residues 271–291 (WCFFICLLIVIILAVILGAYF) form a helical; Anchor for type IV membrane protein membrane-spanning segment. The Extracellular segment spans residues 292–295 (GTRK).

It belongs to the syntaxin family.

Its subcellular location is the membrane. Its function is as follows. Late secretory t-SNARE protein required for secretion and proper cytokinesis. Plays an important role in the secretion of virulence-associated extracellular enzymes and vesicle-mediated polarized hyphal growth. The sequence is that of Protein transport protein SSO2 (SSO2) from Candida albicans (strain SC5314 / ATCC MYA-2876) (Yeast).